Here is a 140-residue protein sequence, read N- to C-terminus: Ubiquitin-like protein ATG12 (140 aa).

The disordered stretch occupies residues 1–52; that stretch reads MAEEPQTVLQLPPSSAAGGEGLTDVSPETTTPEPPSSAAVSPGTEEPAGDTK. The span at 25–42 shows a compositional bias: low complexity; that stretch reads VSPETTTPEPPSSAAVSP. Glycine 140 participates in a covalent cross-link: Glycyl lysine isopeptide (Gly-Lys) (interchain with K-? in acceptor protein).

Belongs to the ATG12 family. In terms of assembly, forms a conjugate with ATG5. Part of the minor complex composed of 4 sets of ATG12-ATG5 and ATG16L1 (400 kDa); this complex interacts with ATG3 leading to disruption of ATG7 interaction and promotion of ATG8-like proteins lipidation. Forms an 800-kDa complex composed of ATG12-ATG5 and ATG16L2. Interacts with DHX58/RIG-1, IFIH1/MDA5 and MAVS/IPS-1 in monomeric form as well as in ATG12-ATG5 conjugate. The interaction with MAVS is further enhanced upon vesicular stomatitis virus (VSV) infection. Interacts with ATG3; this interaction is essential for phosphatidylethanolamine (PE)-conjugated ATG8-like proteins formation. Interacts with ATG7. Interacts with ATG10. Interacts with TECPR1. Interacts with SH3BGRL. The ATG12-ATG5 conjugate interacts with PDCD6IP (via the BRO1 domain); this interaction is bridged by ATG12 and promotes multiple PDCD6IP-mediated functions such as endolysosomal trafficking, macroautophagy and exosome biogenesis. Post-translationally, acetylated by EP300.

The protein resides in the cytoplasm. It localises to the preautophagosomal structure membrane. In terms of biological role, ubiquitin-like protein involved in autophagy vesicles formation. Conjugation with ATG5 through a ubiquitin-like conjugating system involving also ATG7 as an E1-like activating enzyme and ATG10 as an E2-like conjugating enzyme, is essential for its function. The ATG12-ATG5 conjugate acts as an E3-like enzyme which is required for lipidation of ATG8 family proteins and their association to the vesicle membranes. The ATG12-ATG5 conjugate also negatively regulates the innate antiviral immune response by blocking the type I IFN production pathway through direct association with RARRES3 and MAVS. Also plays a role in translation or delivery of incoming viral RNA to the translation apparatus. As part of the ATG8 conjugation system with ATG5 and ATG16L1, required for recruitment of LRRK2 to stressed lysosomes and induction of LRRK2 kinase activity in response to lysosomal stress. The polypeptide is Ubiquitin-like protein ATG12 (Pongo abelii (Sumatran orangutan)).